Reading from the N-terminus, the 498-residue chain is Protein YhjJ (498 aa).

Positions 1–24 are cleaved as a signal peptide; sequence MQGTKIRLLAGGLLMMATAGYVQA.

It belongs to the peptidase M16 family.

Its subcellular location is the periplasm. This Escherichia coli (strain K12) protein is Protein YhjJ (yhjJ).